An 871-amino-acid chain; its full sequence is Chaperone protein ClpB 1 (871 aa).

The 142-residue stretch at 6–147 (PNQFTEKAWA…REAIQQIRGS (142 aa)) folds into the Clp R domain. Repeat regions lie at residues 9-73 (FTEK…ISRQ) and 84-147 (LGQS…IRGS). Residues 160 to 341 (AALEKYGRDL…RRFQQVYVDQ (182 aa)) are NBD1. 207–214 (GEPGVGKT) serves as a coordination point for ATP. The linker stretch occupies residues 342–550 (PSVEDTISIL…IAEIISKWTG (209 aa)). Positions 392 to 526 (IDLVDEAAAK…AEAKLREIQV (135 aa)) form a coiled coil. The NBD2 stretch occupies residues 560-771 (EAQKLLHLEE…RVDEFIIFHS (212 aa)). 610-617 (GPTGVGKT) provides a ligand contact to ATP. The segment at 772 to 871 (LRKDQLRQIV…FRRQVELATV (100 aa)) is C-terminal.

Belongs to the ClpA/ClpB family. In terms of assembly, homohexamer. The oligomerization is ATP-dependent.

It localises to the cytoplasm. Its function is as follows. Part of a stress-induced multi-chaperone system, it is involved in the recovery of the cell from heat-induced damage, in cooperation with DnaK, DnaJ and GrpE. Acts before DnaK, in the processing of protein aggregates. Protein binding stimulates the ATPase activity; ATP hydrolysis unfolds the denatured protein aggregates, which probably helps expose new hydrophobic binding sites on the surface of ClpB-bound aggregates, contributing to the solubilization and refolding of denatured protein aggregates by DnaK. This Thermosynechococcus vestitus (strain NIES-2133 / IAM M-273 / BP-1) protein is Chaperone protein ClpB 1 (clpB1).